The primary structure comprises 317 residues: MKI67 FHA domain-interacting nucleolar phosphoprotein (317 aa).

An N-acetylalanine modification is found at A2. K40 participates in a covalent cross-link: Glycyl lysine isopeptide (Lys-Gly) (interchain with G-Cter in SUMO2). One can recognise an RRM domain in the interval 47 to 125 (GVVYLGHLPS…RLLSCKFMPR (79 aa)). Omega-N-methylarginine is present on R116. Glycyl lysine isopeptide (Lys-Gly) (interchain with G-Cter in SUMO2) cross-links involve residues K181 and K194. R203 is subject to Citrulline. Residues 203–317 (RDSEGNQVLP…KRPRKRKSKQ (115 aa)) form a disordered region. Basic and acidic residues predominate over residues 213–233 (DQKEGLSGEPRRKEKMMKEDI). A Phosphoserine modification is found at S219. Residues 238 to 248 (PKKRKRSRRKK) show a composition bias toward basic residues. Residue S253 is modified to Phosphoserine. 2 positions are modified to phosphothreonine: T257 and T261. The span at 265-284 (LERRKSQVMEVGGDKDDEII) shows a compositional bias: basic and acidic residues. 2 positions are modified to omega-N-methylated arginine: R267 and R268. S270 is modified (phosphoserine). K293 participates in a covalent cross-link: Glycyl lysine isopeptide (Lys-Gly) (interchain with G-Cter in SUMO1); alternate. K293 is covalently cross-linked (Glycyl lysine isopeptide (Lys-Gly) (interchain with G-Cter in SUMO2); alternate). Residue T301 is modified to Phosphothreonine. Over residues 308-317 (KRPRKRKSKQ) the composition is skewed to basic residues.

As to quaternary structure, binds to the FHA domain of MKI67; this interaction is enhanced in mitosis. Phosphorylated. In terms of processing, citrullinated by PADI4. In terms of tissue distribution, expressed in brain, heart, hind limb muscles, intestine, liver, skin and spleen.

The protein localises to the nucleus. It localises to the nucleolus. Its subcellular location is the chromosome. The sequence is that of MKI67 FHA domain-interacting nucleolar phosphoprotein (Nifk) from Mus musculus (Mouse).